Consider the following 37-residue polypeptide: Cytochrome b6-f complex subunit 5 (37 aa).

The chain crosses the membrane as a helical span at residues 5-25; sequence LLFGIVLGLIPVTLTGLFVAA.

Belongs to the PetG family. As to quaternary structure, the 4 large subunits of the cytochrome b6-f complex are cytochrome b6, subunit IV (17 kDa polypeptide, PetD), cytochrome f and the Rieske protein, while the 4 small subunits are PetG, PetL, PetM and PetN. The complex functions as a dimer.

Its subcellular location is the plastid. It localises to the chloroplast thylakoid membrane. Functionally, component of the cytochrome b6-f complex, which mediates electron transfer between photosystem II (PSII) and photosystem I (PSI), cyclic electron flow around PSI, and state transitions. PetG is required for either the stability or assembly of the cytochrome b6-f complex. The chain is Cytochrome b6-f complex subunit 5 from Guillardia theta (Cryptophyte).